A 374-amino-acid chain; its full sequence is Translocating chain-associated membrane protein 1 (374 aa).

At 1-29 (MAIRKKSTKSPPVLSHEFVLQNHADIVSC) the chain is on the cytoplasmic side. The chain crosses the membrane as a helical span at residues 30–50 (VAMVFLLGLMFEITAKASIIF). Residues 51–76 (VTLQYNVTLPATEEQATESVSLYYYG) are Lumenal-facing. A glycan (N-linked (GlcNAc...) asparagine) is linked at Asn56. A helical transmembrane segment spans residues 77-97 (IKDLATVFFYMLVAIIIHAVI). The Cytoplasmic segment spans residues 98-121 (QEYMLDKINRRMHFSKTKHSKFNE). The TLC domain maps to 117–326 (SKFNESGQLS…NFQLRRWREH (210 aa)). A helical membrane pass occupies residues 122 to 142 (SGQLSAFYLFACVWGTFILIS). The Lumenal portion of the chain corresponds to 143-159 (ENYISDPTILWRAYPHN). The chain crosses the membrane as a helical span at residues 160-180 (LMTFQMKFFYISQLAYWLHAF). The Cytoplasmic segment spans residues 181 to 192 (PELYFQKTKKED). A helical transmembrane segment spans residues 193–213 (IPRQLVYIGLYLFHIAGAYLL). The Lumenal segment spans residues 214-217 (NLNH). A helical transmembrane segment spans residues 218–238 (LGLVLLVLHYFVEFLFHISRL). Residues 239–251 (FYFSNEKYQKGFS) are Cytoplasmic-facing. A helical membrane pass occupies residues 252 to 272 (LWAVLFVLGRLLTLILSVLTV). At 273-297 (GFGLARAENQKLDFSTGNFNVLAVR) the chain is on the lumenal side. A helical membrane pass occupies residues 298-318 (IAVLASICVTQAFMMWKFINF). The Cytoplasmic segment spans residues 319–374 (QLRRWREHSAFQAPAVKKKPTVTKGRSSKKGTENGVNGTLTSNVADSPRNKKEKSS). Basic residues predominate over residues 334 to 347 (VKKKPTVTKGRSSK). The tract at residues 334–374 (VKKKPTVTKGRSSKKGTENGVNGTLTSNVADSPRNKKEKSS) is disordered. Over residues 352–363 (NGVNGTLTSNVA) the composition is skewed to polar residues. Ser365 carries the post-translational modification Phosphoserine.

It belongs to the TRAM family. As to quaternary structure, interacts with SEC61B. May interact with Derlin-1/DERL1. (Microbial infection) Interacts with human cytomegalovirus/HHV-5 proteins US2 and US11. Post-translationally, N-glycosylated.

It is found in the endoplasmic reticulum membrane. Its function is as follows. Involved in the translocation of nascent protein chains into or through the endoplasmic reticulum (ER) membrane by facilitating the proper chain positioning at the SEC61 channel. Regulates the exposure of nascent secretory protein chain to the cytosol during translocation into the ER. May affect the phospholipid bilayer in the vicinity of the lateral gate of the SEC61 channel, thereby facilitating ER protein transport. Intimately associates with transmembrane (TM) domain of nascent membrane proteins during the entire integration process into the ER membrane. Associates with the second TM domain of G-protein-coupled receptor opsin/OPSD nascent chain in the ER membrane, which may facilitate its integration into the membrane. Under conditions of ER stress, participates in the disposal of misfolded ER membrane proteins during the unfolded protein response (UPR), an integrated stress response (ISR) pathway, by selectively retrotranslocating misfolded ER-membrane proteins from the ER into the cytosol where they are ubiquitinated and degraded by the proteasome. Functionally, (Microbial infection) In case of cytomegalovirus infection, participates in US2- and US11-mediated ER-to-cytosol retrotranslocation and subsequent degradation of major histocompatibility complex (MHC) class I heavy chains, thereby decreasing the immune detection by cytotoxic T-cells. The protein is Translocating chain-associated membrane protein 1 of Homo sapiens (Human).